Here is a 608-residue protein sequence, read N- to C-terminus: Albumin 1 (608 aa).

A signal peptide spans 1 to 14; it reads MQWLSVCSLLVLLS. A propeptide spanning residues 15 to 18 is cleaved from the precursor; it reads VLSR. Albumin domains are found at residues 19 to 205, 206 to 398, and 402 to 600; these read SQAQ…TFQH, AVMK…AGSD, and KITD…KLVS. 18 cysteine pairs are disulfide-bonded: cysteine 26/cysteine 72, cysteine 71/cysteine 80, cysteine 93/cysteine 108, cysteine 107/cysteine 118, cysteine 142/cysteine 187, cysteine 186/cysteine 195, cysteine 218/cysteine 264, cysteine 263/cysteine 271, cysteine 283/cysteine 299, cysteine 298/cysteine 309, cysteine 336/cysteine 381, cysteine 380/cysteine 389, cysteine 414/cysteine 460, cysteine 459/cysteine 471, cysteine 484/cysteine 500, cysteine 499/cysteine 510, cysteine 537/cysteine 582, and cysteine 581/cysteine 590. N-linked (GlcNAc...) asparagine glycosylation occurs at asparagine 501.

Belongs to the ALB/AFP/VDB family. In terms of tissue distribution, plasma.

It localises to the secreted. Binds water, Ca(2+), Na(+), K(+), fatty acids, hormones, bilirubin and drugs. Its main function is the regulation of the colloidal osmotic pressure of blood. The polypeptide is Albumin 1 (alb1) (Salmo salar (Atlantic salmon)).